Here is a 270-residue protein sequence, read N- to C-terminus: Protein-ADP-ribose hydrolase (270 aa).

Residues 73-267 enclose the Macro domain; that stretch reads VSVKDCQKTN…LYDTYLQKEN (195 aa). Residues Asp92, Ile93, and Asn106 each contribute to the ADP-D-ribose site. Zn(2+) contacts are provided by Cys112, His117, and Cys119. ADP-D-ribose is bound by residues Cys119, Ile120, Asp121, Ser212, Thr213, Gly214, Glu215, and Phe216.

Belongs to the MacroD-type family. Zn-Macro subfamily. As to quaternary structure, monomer. Interacts with the lipoylated form of GcvH-L. It depends on Zn(2+) as a cofactor.

It carries out the reaction 4-O-(ADP-D-ribosyl)-L-aspartyl-[protein] + H2O = L-aspartyl-[protein] + ADP-D-ribose + H(+). The catalysed reaction is 5-O-(ADP-D-ribosyl)-L-glutamyl-[protein] + H2O = L-glutamyl-[protein] + ADP-D-ribose + H(+). The enzyme catalyses S-(ADP-D-ribosyl)-L-cysteinyl-[protein] + H2O = ADP-D-ribose + L-cysteinyl-[protein]. Functionally, ADP-ribosylhydrolase that specifically reverses the SirTM-mediated mono-ADP-ribosylation at an asparatate residue of GcvH-L (SpyM50867), by releasing ADP-ribose from the target protein. May play a role in the regulation of the response to host-induced oxidative stress. It can also hydrolyze ADP-ribosyl-glutamate bonds and ADP-ribosyl-cysteine bonds. In vitro, it can remove the ADP-ribosyl modification from the human mono-ADP-ribosylated PARP1 E988Q mutant, which is primarily modified on glutamate site with only minor aspartate contribution. It can also hydrolyze the ADP-ribosyl-cysteinyl glycosidic bond of a Cys-ADP-ribosylated synthetic peptide. This is Protein-ADP-ribose hydrolase from Streptococcus pyogenes serotype M5 (strain Manfredo).